A 316-amino-acid polypeptide reads, in one-letter code: Prenytransferase adrG (316 aa).

A run of 7 helical transmembrane segments spans residues 36–56 (LLGF…CASI), 60–80 (KIPI…SIFL), 131–151 (VLIY…FFAL), 163–183 (PQIT…SLGL), 191–211 (PTVC…VIYS), 247–267 (GFLA…VVSV), and 294–314 (KSAF…EYCL).

It belongs to the UbiA prenyltransferase family. It depends on Mg(2+) as a cofactor.

The protein resides in the membrane. It carries out the reaction 3,5-dimethylorsellinate + (2E,6E)-farnesyl diphosphate = (3R)-3-farnesyl-6-hydroxy-2,3,5-trimethyl-4-oxocyclohexa-1,5-diene-1-carboxylate + diphosphate + H(+). It participates in secondary metabolite biosynthesis; terpenoid biosynthesis. Functionally, prenytransferase; part of the gene cluster that mediates the biosynthesis of andrastins, meroterpenoid compounds that exhibit inhibitory activity against ras farnesyltransferase, suggesting that they could be promising leads for antitumor agents. The first step of the pathway is the synthesis of 3,5-dimethylorsellinic acid (DMOA) by the polyketide synthase adrD via condensation of one acetyl-CoA starter unit with 3 malonyl-CoA units and 2 methylations. DMAO is then converted to farnesyl-DMAO by the prenyltransferase adrG. The methyltransferase adrK catalyzes the methylation of the carboxyl group of farnesyl-DMAO to farnesyl-DMAO methyl ester which is further converted to epoxyfarnesyl-DMAO methyl ester by the FAD-dependent monooxygenase adrH. The terpene cyclase adrI then catalyzes the carbon skeletal rearrangement to generate the andrastin E, the first compound in the pathway having the andrastin scaffold, with the tetracyclic ring system. The post-cyclization tailoring enzymes adrF, adrE, adrJ, and adrA, are involved in the conversion of andrastin E into andrastin A. The short chain dehydrogenase adrF is responsible for the oxidation of the C-3 a hydroxyl group of andrastin E to yield the corresponding ketone, andrastin D. The ketoreductase adrE stereoselectively reduces the carbonyl moiety to reverse the stereochemistry of the C-3 position to yield andrastin F. The acetyltransferase adrJ is the acetyltransferase that attaches the acetyl group to the C-3 hydroxyl group of andrastin F to yield andrastin C. Finally, the cytochrome P450 monooxygenase adrA catalyzes two sequential oxidation reactions of the C-23 methyl group, to generate the corresponding alcohol andrastin B, and aldehyde andrastin A. The sequence is that of Prenytransferase adrG from Penicillium roqueforti.